We begin with the raw amino-acid sequence, 78 residues long: uncharacterized protein (78 aa).

The disordered stretch occupies residues 1-78 (MSSNSNTDHS…VDLEGPKDEQ (78 aa)). Basic and acidic residues-rich tracts occupy residues 10–33 (STGD…ETES) and 63–78 (LNLK…KDEQ).

This is an uncharacterized protein from Schizosaccharomyces pombe (strain 972 / ATCC 24843) (Fission yeast).